A 110-amino-acid polypeptide reads, in one-letter code: Large ribosomal subunit protein uL22 (110 aa).

It belongs to the universal ribosomal protein uL22 family. In terms of assembly, part of the 50S ribosomal subunit.

Its function is as follows. This protein binds specifically to 23S rRNA; its binding is stimulated by other ribosomal proteins, e.g. L4, L17, and L20. It is important during the early stages of 50S assembly. It makes multiple contacts with different domains of the 23S rRNA in the assembled 50S subunit and ribosome. The globular domain of the protein is located near the polypeptide exit tunnel on the outside of the subunit, while an extended beta-hairpin is found that lines the wall of the exit tunnel in the center of the 70S ribosome. The polypeptide is Large ribosomal subunit protein uL22 (Nitrosomonas eutropha (strain DSM 101675 / C91 / Nm57)).